We begin with the raw amino-acid sequence, 525 residues long: Peptide chain release factor 3 (525 aa).

Positions Ala-9–Gln-276 constitute a tr-type G domain. Residues Ser-18–Thr-25, Asp-86–His-90, and Asn-140–Asp-143 each bind GTP.

This sequence belongs to the TRAFAC class translation factor GTPase superfamily. Classic translation factor GTPase family. PrfC subfamily.

It is found in the cytoplasm. Increases the formation of ribosomal termination complexes and stimulates activities of RF-1 and RF-2. It binds guanine nucleotides and has strong preference for UGA stop codons. It may interact directly with the ribosome. The stimulation of RF-1 and RF-2 is significantly reduced by GTP and GDP, but not by GMP. The protein is Peptide chain release factor 3 of Francisella philomiragia subsp. philomiragia (strain ATCC 25017 / CCUG 19701 / FSC 153 / O#319-036).